Consider the following 272-residue polypeptide: MLNLNELKSGFHYFVMGWHFITQKGLRRFVIIPILLNTILLCGLFWLFISQISSAIDWVMNFIPDWLSFLSVILLTLSILTILLLFYFTFTTFSGFIAAPFNGLLAEKVEKMLTEENINDDSLVDIMRDVPRMLAREWQKLRYSLPKIIALFLLSFIPLVGQTIVPVLTFLFTCWMMAIQYCDYPFDNHKVSFDIMKTALGNQRTQSLTFGGLVTCCTFVPVINLLIMPVAVCGATLMWVENYRNDLGFNMNRSFSSQTGLDVRSENTGIVK.

The next 4 helical transmembrane spans lie at 29–49, 66–86, 148–168, and 219–239; these read FVII…WLFI, WLSF…LLLF, IIAL…VPVL, and FVPV…TLMW.

This sequence belongs to the CysZ family.

It localises to the cell inner membrane. High affinity, high specificity proton-dependent sulfate transporter, which mediates sulfate uptake. Provides the sulfur source for the cysteine synthesis pathway. The polypeptide is Sulfate transporter CysZ (Haemophilus influenzae (strain 86-028NP)).